Consider the following 231-residue polypeptide: Two-component response regulator ORR1 (231 aa).

A Response regulatory domain is found at 9–135 (RVLLVDDSPV…DVQRLRKCSP (127 aa)). A 4-aspartylphosphate modification is found at Asp68.

This sequence belongs to the ARR family. Type-A subfamily. Two-component system major event consists of a His-to-Asp phosphorelay between a sensor histidine kinase (HK) and a response regulator (RR). In plants, the His-to-Asp phosphorelay involves an additional intermediate named Histidine-containing phosphotransfer protein (HPt). This multistep phosphorelay consists of a His-Asp-His-Asp sequential transfer of a phosphate group between first a His and an Asp of the HK protein, followed by the transfer to a conserved His of the HPt protein and finally the transfer to an Asp in the receiver domain of the RR protein. In terms of tissue distribution, expressed in mature leaves and flowers, and at low levels in roots and shoots.

Functions as a response regulator involved in His-to-Asp phosphorelay signal transduction system. Phosphorylation of the Asp residue in the receiver domain activates the ability of the protein to promote the transcription of target genes. Type-A response regulators seem to act as negative regulators of the cytokinin signaling. This chain is Two-component response regulator ORR1, found in Oryza sativa subsp. indica (Rice).